A 255-amino-acid polypeptide reads, in one-letter code: Pyridoxine 5'-phosphate synthase (255 aa).

Residues N8 and R19 each coordinate 3-amino-2-oxopropyl phosphate. Residue H44 is the Proton acceptor of the active site. R46 and H51 together coordinate 1-deoxy-D-xylulose 5-phosphate. E74 serves as the catalytic Proton acceptor. T111 contributes to the 1-deoxy-D-xylulose 5-phosphate binding site. H202 functions as the Proton donor in the catalytic mechanism. Residues D203 and 225–226 (GH) each bind 3-amino-2-oxopropyl phosphate.

It belongs to the PNP synthase family. As to quaternary structure, homooctamer; tetramer of dimers.

The protein localises to the cytoplasm. The enzyme catalyses 3-amino-2-oxopropyl phosphate + 1-deoxy-D-xylulose 5-phosphate = pyridoxine 5'-phosphate + phosphate + 2 H2O + H(+). Its pathway is cofactor biosynthesis; pyridoxine 5'-phosphate biosynthesis; pyridoxine 5'-phosphate from D-erythrose 4-phosphate: step 5/5. Catalyzes the complicated ring closure reaction between the two acyclic compounds 1-deoxy-D-xylulose-5-phosphate (DXP) and 3-amino-2-oxopropyl phosphate (1-amino-acetone-3-phosphate or AAP) to form pyridoxine 5'-phosphate (PNP) and inorganic phosphate. This Xanthomonas oryzae pv. oryzae (strain PXO99A) protein is Pyridoxine 5'-phosphate synthase.